Consider the following 130-residue polypeptide: D-ribose pyranase (130 aa).

The active-site Proton donor is His20. Substrate-binding positions include Asp28, His97, and 119–121; that span reads YAN.

The protein belongs to the RbsD / FucU family. RbsD subfamily. In terms of assembly, homodecamer.

Its subcellular location is the cytoplasm. The catalysed reaction is beta-D-ribopyranose = beta-D-ribofuranose. It functions in the pathway carbohydrate metabolism; D-ribose degradation; D-ribose 5-phosphate from beta-D-ribopyranose: step 1/2. Functionally, catalyzes the interconversion of beta-pyran and beta-furan forms of D-ribose. This is D-ribose pyranase from Bacillus pumilus (strain SAFR-032).